Here is a 254-residue protein sequence, read N- to C-terminus: Phosphoribosylaminoimidazole-succinocarboxamide synthase (254 aa).

The protein belongs to the SAICAR synthetase family.

The enzyme catalyses 5-amino-1-(5-phospho-D-ribosyl)imidazole-4-carboxylate + L-aspartate + ATP = (2S)-2-[5-amino-1-(5-phospho-beta-D-ribosyl)imidazole-4-carboxamido]succinate + ADP + phosphate + 2 H(+). The protein operates within purine metabolism; IMP biosynthesis via de novo pathway; 5-amino-1-(5-phospho-D-ribosyl)imidazole-4-carboxamide from 5-amino-1-(5-phospho-D-ribosyl)imidazole-4-carboxylate: step 1/2. The sequence is that of Phosphoribosylaminoimidazole-succinocarboxamide synthase from Rhizobium meliloti (strain 1021) (Ensifer meliloti).